Reading from the N-terminus, the 276-residue chain is Alpha N-terminal protein methyltransferase 1 (276 aa).

Residues 1-57 (MTTTLEEQLSDKLQMMDETTDKVQGSSKQKDDSSIAASSDAKTASPSSSDSSTKVAA) form a disordered region. Residues 34 to 57 (SIAASSDAKTASPSSSDSSTKVAA) show a composition bias toward low complexity. Residues G114, R119, 136-138 (EQD), 167-168 (LQ), and Q182 contribute to the S-adenosyl-L-methionine site.

Belongs to the methyltransferase superfamily. NTM1 family.

The enzyme catalyses N-terminal L-alanyl-L-prolyl-L-lysyl-[protein] + 3 S-adenosyl-L-methionine = N-terminal N,N,N-trimethyl-L-alanyl-L-prolyl-L-lysyl-[protein] + 3 S-adenosyl-L-homocysteine + 3 H(+). The catalysed reaction is N-terminal L-seryl-L-prolyl-L-lysyl-[protein] + 3 S-adenosyl-L-methionine = N-terminal N,N,N-trimethyl-L-seryl-L-prolyl-L-lysyl-[protein] + 3 S-adenosyl-L-homocysteine + 3 H(+). It catalyses the reaction N-terminal L-prolyl-L-prolyl-L-lysyl-[protein] + 2 S-adenosyl-L-methionine = N-terminal N,N-dimethyl-L-prolyl-L-prolyl-L-lysyl-[protein] + 2 S-adenosyl-L-homocysteine + 2 H(+). Functionally, alpha-N-methyltransferase that methylates the N-terminus of target proteins containing the N-terminal motif [Ala/Pro/Ser]-Pro-Lys when the initiator Met is cleaved. Specifically catalyzes mono-, di- or tri-methylation of exposed alpha-amino group of Ala or Ser residue in the [Ala/Ser]-Pro-Lys motif and mono- or di-methylation of Pro in the Pro-Pro-Lys motif. The chain is Alpha N-terminal protein methyltransferase 1 (Ntmt) from Drosophila melanogaster (Fruit fly).